Here is a 71-residue protein sequence, read N- to C-terminus: UPF0346 protein SAK_1533 (71 aa).

It belongs to the UPF0346 family.

In Streptococcus agalactiae serotype Ia (strain ATCC 27591 / A909 / CDC SS700), this protein is UPF0346 protein SAK_1533.